A 176-amino-acid polypeptide reads, in one-letter code: I-Kappa-B like protein G1 (176 aa).

ANK repeat units follow at residues 56-88 (EGRQ…DINS), 93-123 (FGNT…ELGA), and 127-156 (LYKT…VCDD).

Belongs to the polydnaviridae I-Kappa-B-like protein family.

Suppresses the host immune response through NF-kappa-B inactivation. Possesses ankyrin repeat domains required for NF-kappa-B binding but lacks the regulatory regions required for dissociation from NF-kappa-B and degradation. Therefore, prevents host NF-kappa-B release and subsequent activation. This Microplitis demolitor (Parasitoid wasp) protein is I-Kappa-B like protein G1 (G3).